A 550-amino-acid chain; its full sequence is Phosphomannomutase (550 aa).

Serine 148 functions as the Phosphoserine intermediate in the catalytic mechanism. Serine 148, aspartate 300, aspartate 302, and aspartate 304 together coordinate Mg(2+).

This sequence belongs to the phosphohexose mutase family. The cofactor is Mg(2+).

It catalyses the reaction alpha-D-mannose 1-phosphate = D-mannose 6-phosphate. The chain is Phosphomannomutase (manB) from Mycoplasma genitalium (strain ATCC 33530 / DSM 19775 / NCTC 10195 / G37) (Mycoplasmoides genitalium).